The chain runs to 118 residues: Small ribosomal subunit protein uS13 (118 aa).

The interval 91 to 118 is disordered; it reads HRRGLPVRGQRTRTNARTRKGPRRPIKK.

This sequence belongs to the universal ribosomal protein uS13 family. In terms of assembly, part of the 30S ribosomal subunit. Forms a loose heterodimer with protein S19. Forms two bridges to the 50S subunit in the 70S ribosome.

Located at the top of the head of the 30S subunit, it contacts several helices of the 16S rRNA. In the 70S ribosome it contacts the 23S rRNA (bridge B1a) and protein L5 of the 50S subunit (bridge B1b), connecting the 2 subunits; these bridges are implicated in subunit movement. Contacts the tRNAs in the A and P-sites. This chain is Small ribosomal subunit protein uS13, found in Methylococcus capsulatus (strain ATCC 33009 / NCIMB 11132 / Bath).